The chain runs to 281 residues: Pantothenate synthetase (281 aa).

Residue 30 to 37 participates in ATP binding; the sequence is MGNLHLGH. The active-site Proton donor is the His-37. Gln-61 contributes to the (R)-pantoate binding site. Position 61 (Gln-61) interacts with beta-alanine. ATP is bound at residue 149–152; it reads GRKD. Gln-155 is a binding site for (R)-pantoate. Residues Ile-178 and 186–189 contribute to the ATP site; that span reads MSSR.

The protein belongs to the pantothenate synthetase family. Homodimer.

The protein localises to the cytoplasm. It catalyses the reaction (R)-pantoate + beta-alanine + ATP = (R)-pantothenate + AMP + diphosphate + H(+). Its pathway is cofactor biosynthesis; (R)-pantothenate biosynthesis; (R)-pantothenate from (R)-pantoate and beta-alanine: step 1/1. Functionally, catalyzes the condensation of pantoate with beta-alanine in an ATP-dependent reaction via a pantoyl-adenylate intermediate. This Shewanella woodyi (strain ATCC 51908 / MS32) protein is Pantothenate synthetase.